The sequence spans 1084 residues: AP-3 complex subunit beta-1 (1084 aa).

A compositionally biased stretch (polar residues) spans 1-11 (MSSNSFAYNEQ). Positions 1–26 (MSSNSFAYNEQSGGGEATELGQEATS) are disordered. Ser-276 and Ser-609 each carry phosphoserine. The tract at residues 663-800 (AGKAKKENPD…KEKKTKQERN (138 aa)) is disordered. A compositionally biased stretch (basic and acidic residues) spans 666–677 (AKKENPDKKFYS). Residues 678–717 (ESEEEEDSSESSSDSESESGSESGEDEEDDRSGDSAEDSG) are compositionally biased toward acidic residues. Low complexity predominate over residues 718–729 (ESGSEPEAGKGR). Residues 738-753 (GRGDSKDVDKEKENSK) are compositionally biased toward basic and acidic residues. Ser-742 bears the Phosphoserine mark. Over residues 754-767 (TSESSSGESSSIEE) the composition is skewed to low complexity. Positions 768–781 (SSSDSESESESESE) are enriched in acidic residues. Over residues 782–800 (SESRKVTKEKEKKTKQERN) the composition is skewed to basic and acidic residues.

The protein belongs to the adaptor complexes large subunit family. In terms of assembly, adaptor protein complex 3 (AP-3) is a heterotetramer composed of two large adaptins (delta-type subunit AP3D1 and beta-type subunit AP3B1 or AP3B2), a medium adaptin (mu-type subunit AP3M1 or AP3M2) and a small adaptin (sigma-type subunit APS1 or AP3S2). AP-3 associates with the BLOC-1 complex. Interacts with KIF3A; interaction is direct; interaction is impaired by pyrophosphorylation of AP3B1. Post-translationally, phosphorylated on serine residues. In terms of processing, pyrophosphorylation by 5-diphosphoinositol pentakisphosphate (5-IP7) impairs interaction with KIF3A. Serine pyrophosphorylation is achieved by Mg(2+)-dependent, but enzyme independent transfer of a beta-phosphate from a inositol pyrophosphate to a pre-phosphorylated serine residue.

It localises to the cytoplasmic vesicle. Its subcellular location is the clathrin-coated vesicle membrane. The protein localises to the golgi apparatus. In terms of biological role, subunit of non-clathrin- and clathrin-associated adaptor protein complex 3 (AP-3) that plays a role in protein sorting in the late-Golgi/trans-Golgi network (TGN) and/or endosomes. The AP complexes mediate both the recruitment of clathrin to membranes and the recognition of sorting signals within the cytosolic tails of transmembrane cargo molecules. AP-3 appears to be involved in the sorting of a subset of transmembrane proteins targeted to lysosomes and lysosome-related organelles. In concert with the BLOC-1 complex, AP-3 is required to target cargos into vesicles assembled at cell bodies for delivery into neurites and nerve terminals. The polypeptide is AP-3 complex subunit beta-1 (AP3B1) (Bos taurus (Bovine)).